The primary structure comprises 188 residues: dCTP deaminase (188 aa).

DCTP is bound at residue 109-114 (KSTYAR). E135 functions as the Proton donor/acceptor in the catalytic mechanism. DCTP-binding residues include Q154, Y168, and Q178.

This sequence belongs to the dCTP deaminase family. As to quaternary structure, homotrimer.

It catalyses the reaction dCTP + H2O + H(+) = dUTP + NH4(+). It participates in pyrimidine metabolism; dUMP biosynthesis; dUMP from dCTP (dUTP route): step 1/2. Functionally, catalyzes the deamination of dCTP to dUTP. The sequence is that of dCTP deaminase from Helicobacter pylori (strain J99 / ATCC 700824) (Campylobacter pylori J99).